The chain runs to 508 residues: Maturase K (508 aa).

The protein belongs to the intron maturase 2 family. MatK subfamily.

It is found in the plastid. The protein localises to the chloroplast. In terms of biological role, usually encoded in the trnK tRNA gene intron. Probably assists in splicing its own and other chloroplast group II introns. The protein is Maturase K of Antirrhinum majus (Garden snapdragon).